We begin with the raw amino-acid sequence, 469 residues long: NADH-quinone oxidoreductase subunit N (469 aa).

14 consecutive transmembrane segments (helical) span residues 9 to 29, 40 to 60, 76 to 96, 105 to 125, 128 to 148, 162 to 182, 201 to 221, 234 to 254, 265 to 285, 294 to 316, 327 to 347, 365 to 385, 402 to 422, and 448 to 468; these read PLLMASEMMMFGAGLVALIAG, VGVMAAAAQVGVIGVAVVQMV, ATGVARIACAAGLLLIWAVAG, EAETYALLMFSATGVLVLAGA, LLLLVAGYFLASIPLYGLVGL, YLMGALFGILLMLGVTILYGL, VAVAAGVVGVLAGLMFEAGGV, ANATAATFLTTVPKIGALVAL, LAWPVLIAVFAVISMTLGNLA, RLLGWSTVSQVGYLLVPITVAGA, YLGGYTVTNIAAFAVTAALPG, AAALVVALLGLVGTPPTAVFI, LAVVVFVNTLVSLFYYLRWII, and VLAAALSLLLGIIAGPVWQLV.

Belongs to the complex I subunit 2 family. In terms of assembly, NDH-1 is composed of 14 different subunits. Subunits NuoA, H, J, K, L, M, N constitute the membrane sector of the complex.

Its subcellular location is the cell membrane. It carries out the reaction a quinone + NADH + 5 H(+)(in) = a quinol + NAD(+) + 4 H(+)(out). In terms of biological role, NDH-1 shuttles electrons from NADH, via FMN and iron-sulfur (Fe-S) centers, to quinones in the respiratory chain. The immediate electron acceptor for the enzyme in this species is believed to be a menaquinone. Couples the redox reaction to proton translocation (for every two electrons transferred, four hydrogen ions are translocated across the cytoplasmic membrane), and thus conserves the redox energy in a proton gradient. This is NADH-quinone oxidoreductase subunit N from Mycobacterium sp. (strain JLS).